A 723-amino-acid polypeptide reads, in one-letter code: Peroxisomal bifunctional enzyme (723 aa).

Positions 1-282 (MAEYTRLHNA…LAERKANKWS (282 aa)) are enoyl-CoA hydratase / isomerase. The residue at position 38 (K38) is an N6-succinyllysine. Residue G101 coordinates substrate. Position 165 is an N6-acetyllysine; alternate (K165). At K165 the chain carries N6-succinyllysine; alternate. K171 carries the N6-acetyllysine modification. K219 is modified (N6-acetyllysine; alternate). K219 bears the N6-succinyllysine; alternate mark. K250 is subject to N6-acetyllysine. Residues K280 and K290 each carry the N6-succinyllysine modification. The tract at residues 283-572 (TPSGASWKTA…DVLCELGRFG (290 aa)) is 3-hydroxyacyl-CoA dehydrogenase. K346, K350, and K464 each carry N6-acetyllysine. K532 carries the post-translational modification N6-succinyllysine. Phosphothreonine is present on T548. N6-succinyllysine is present on K577. K584, K591, and K710 each carry N6-acetyllysine; alternate. K584, K591, and K710 each carry N6-succinyllysine; alternate. The tract at residues 699 to 723 (KKLASQGNPPQKEWQSLAGSPSSKL) is disordered. The span at 703 to 723 (SQGNPPQKEWQSLAGSPSSKL) shows a compositional bias: polar residues. S718 is modified (phosphoserine). The Microbody targeting signal motif lies at 721-723 (SKL). K722 carries the post-translational modification N6-succinyllysine.

In the N-terminal section; belongs to the enoyl-CoA hydratase/isomerase family. The protein in the C-terminal section; belongs to the 3-hydroxyacyl-CoA dehydrogenase family. Monomer. Acetylated, leading to enhanced enzyme activity. Acetylation is enhanced by up to 80% after treatment either with trichostin A (TSA) or with nicotinamide (NAM) with highest increase on Lys-346. Acetylation and enzyme activity increased by about 1.5% on addition of fatty acids.

The protein localises to the peroxisome. The catalysed reaction is a (3S)-3-hydroxyacyl-CoA = a (2E)-enoyl-CoA + H2O. The enzyme catalyses a 4-saturated-(3S)-3-hydroxyacyl-CoA = a (3E)-enoyl-CoA + H2O. It carries out the reaction a (3Z)-enoyl-CoA = a 4-saturated (2E)-enoyl-CoA. It catalyses the reaction a (3E)-enoyl-CoA = a 4-saturated (2E)-enoyl-CoA. The catalysed reaction is a (3S)-3-hydroxyacyl-CoA + NAD(+) = a 3-oxoacyl-CoA + NADH + H(+). The enzyme catalyses (2S,3S)-3-hydroxy-2-methylbutanoyl-CoA = (2E)-2-methylbut-2-enoyl-CoA + H2O. It carries out the reaction (3S)-hydroxyhexadecanoyl-CoA + NAD(+) = 3-oxohexadecanoyl-CoA + NADH + H(+). It catalyses the reaction (3S)-hydroxyhexadecanoyl-CoA = (2E)-hexadecenoyl-CoA + H2O. The catalysed reaction is (2E)-hexadecenedioyl-CoA + H2O = (3S)-hydroxyhexadecanedioyl-CoA. The enzyme catalyses (3S)-hydroxyhexadecanedioyl-CoA + NAD(+) = 3-oxohexadecanedioyl-CoA + NADH + H(+). It carries out the reaction (3E,5Z)-tetradecadienoyl-CoA = (2E,5Z)-tetradecadienoyl-CoA. It catalyses the reaction (3E,5Z)-octadienoyl-CoA = (2E,5Z)-octadienoyl-CoA. The catalysed reaction is (3S)-hydroxydecanoyl-CoA + NAD(+) = 3-oxodecanoyl-CoA + NADH + H(+). The enzyme catalyses (3E)-decenoyl-CoA = (2E)-decenoyl-CoA. It carries out the reaction (3Z)-hexenoyl-CoA = (2E)-hexenoyl-CoA. It catalyses the reaction (3E)-hexenoyl-CoA = (2E)-hexenoyl-CoA. The catalysed reaction is (3S)-hydroxydecanoyl-CoA = (2E)-decenoyl-CoA + H2O. The enzyme catalyses (3S)-hydroxyhexanoyl-CoA = (2E)-hexenoyl-CoA + H2O. It participates in lipid metabolism; fatty acid beta-oxidation. Its activity is regulated as follows. Enzyme activity enhanced by acetylation. Functionally, peroxisomal trifunctional enzyme possessing 2-enoyl-CoA hydratase, 3-hydroxyacyl-CoA dehydrogenase, and delta 3, delta 2-enoyl-CoA isomerase activities. Catalyzes two of the four reactions of the long chain fatty acids peroxisomal beta-oxidation pathway. Can also use branched-chain fatty acids such as 2-methyl-2E-butenoyl-CoA as a substrate, which is hydrated into (2S,3S)-3-hydroxy-2-methylbutanoyl-CoA. Optimal isomerase for 2,5 double bonds into 3,5 form isomerization in a range of enoyl-CoA species. Also able to isomerize both 3-cis and 3-trans double bonds into the 2-trans form in a range of enoyl-CoA species. Regulates the amount of medium-chain dicarboxylic fatty acids which are essential regulators of all fatty acid oxidation pathways. Also involved in the degradation of long-chain dicarboxylic acids through peroxisomal beta-oxidation. The sequence is that of Peroxisomal bifunctional enzyme (EHHADH) from Pongo abelii (Sumatran orangutan).